The sequence spans 427 residues: Serine--tRNA ligase (427 aa).

235–237 (TAE) is an L-serine binding site. ATP is bound by residues 266-268 (RRE) and Val-282. Glu-289 contributes to the L-serine binding site. ATP is bound at residue 353–356 (EASS). Ser-389 serves as a coordination point for L-serine.

The protein belongs to the class-II aminoacyl-tRNA synthetase family. Type-1 seryl-tRNA synthetase subfamily. In terms of assembly, homodimer. The tRNA molecule binds across the dimer.

It is found in the cytoplasm. It catalyses the reaction tRNA(Ser) + L-serine + ATP = L-seryl-tRNA(Ser) + AMP + diphosphate + H(+). It carries out the reaction tRNA(Sec) + L-serine + ATP = L-seryl-tRNA(Sec) + AMP + diphosphate + H(+). The protein operates within aminoacyl-tRNA biosynthesis; selenocysteinyl-tRNA(Sec) biosynthesis; L-seryl-tRNA(Sec) from L-serine and tRNA(Sec): step 1/1. Catalyzes the attachment of serine to tRNA(Ser). Is also able to aminoacylate tRNA(Sec) with serine, to form the misacylated tRNA L-seryl-tRNA(Sec), which will be further converted into selenocysteinyl-tRNA(Sec). The polypeptide is Serine--tRNA ligase (Chloroherpeton thalassium (strain ATCC 35110 / GB-78)).